The primary structure comprises 760 residues: Formate acetyltransferase 1 (760 aa).

A PFL domain is found at 3-625; it reads ELNEKLATAW…KTGNTPDGRR (623 aa). Lys-63 carries the post-translational modification N6-acetyllysine; alternate. Lys-63 bears the N6-succinyllysine; alternate mark. Position 107 is an N6-succinyllysine (Lys-107). N6-acetyllysine; alternate is present on Lys-117. An N6-succinyllysine; alternate modification is found at Lys-117. Lys-124 bears the N6-succinyllysine mark. Lys-195 is subject to N6-acetyllysine; alternate. Residue Lys-195 is modified to N6-succinyllysine; alternate. The active-site S-acetylcysteine intermediate is Cys-419. Catalysis depends on Cys-420, which acts as the Cysteine radical intermediate. The residue at position 454 (Lys-454) is an N6-acetyllysine; alternate. Lys-454 carries the N6-succinyllysine; alternate modification. Position 467 is an N6-succinyllysine (Lys-467). 2 positions are modified to N6-acetyllysine: Lys-541 and Lys-591. In terms of domain architecture, Glycine radical spans 632–760; that stretch reads PGANPMHGRD…VITRTFTQSM (129 aa). Lys-654 carries the post-translational modification N6-succinyllysine. At Gly-735 the chain carries Glycine radical.

This sequence belongs to the glycyl radical enzyme (GRE) family. PFL subfamily. In terms of assembly, homodimer. Interacts specifically with FocA.

The protein resides in the cytoplasm. The enzyme catalyses formate + acetyl-CoA = pyruvate + CoA. Its pathway is fermentation; pyruvate fermentation; formate from pyruvate: step 1/1. In terms of biological role, catalyzes the conversion of pyruvate to formate and acetyl-CoA. In addition, may be involved in the control of the activity of the formate channel FocA, via direct interaction with FocA. This Escherichia coli (strain K12) protein is Formate acetyltransferase 1 (pflB).